A 593-amino-acid chain; its full sequence is Meiosis-specific APC/C activator protein AMA1 (593 aa).

Over residues 1–11 the composition is skewed to basic residues; that stretch reads MATPHLYHRYN. The disordered stretch occupies residues 1–26; it reads MATPHLYHRYNSKSSNKNINSSGNST. Positions 12–25 are enriched in low complexity; that stretch reads SKSSNKNINSSGNS. The C-box motif lies at 29-35; the sequence is DRFIPKS. Residues 94 to 109 are compositionally biased toward low complexity; that stretch reads SSISSSSESQVTRSGS. The segment at 94–125 is disordered; sequence SSISSSSESQVTRSGSARASRNDYSKLTKEQK. A compositionally biased stretch (basic and acidic residues) spans 113–125; that stretch reads SRNDYSKLTKEQK. 6 WD repeats span residues 226 to 264, 271 to 310, 323 to 364, 388 to 427, 432 to 474, and 525 to 564; these read RNDFYSNLISWSRTTNNVLVGLGCSVYIWSEKEGAVSIL, EKRDLVTCVSFCPYNTYFIVGTKFGRILLYDQKEFFHSSN, ESFK…FPIK, AQAQQVCGISLNEHANLLAVGGNDNSCSLWDISDLDKPIK, PHKA…LLDE, and PNPLRVLSAVISPSSMAICVATNDETIRFYELWNDKEEII.

Belongs to the WD repeat CDC20/Fizzy family. In terms of assembly, interacts with CDC16.

Activator protein that regulates the ubiquitin ligase activity and substrate specificity of the anaphase promoting complex/cyclosome (APC/C). Required for the ubiquitination and subsequent degradation of the B-type cyclin CLB1 by the APC/C complex during meiosis. Required for meiosis I, late meiotic gene expression and spore wall assembly. The chain is Meiosis-specific APC/C activator protein AMA1 (AMA1) from Saccharomyces cerevisiae (strain ATCC 204508 / S288c) (Baker's yeast).